Reading from the N-terminus, the 437-residue chain is Transcription factor AP-2-alpha (437 aa).

Residue K10 forms a Glycyl lysine isopeptide (Lys-Gly) (interchain with G-Cter in SUMO); alternate linkage. A Glycyl lysine isopeptide (Lys-Gly) (interchain with G-Cter in SUMO2); alternate cross-link involves residue K10. The segment at 14–107 (CEDRHDGASN…GQRQSQESGL (94 aa)) is disordered. The PPxY motif motif lies at 57–62 (YFPPPY). Low complexity-rich tracts occupy residues 65–74 (IYPQSQDPYS) and 88–101 (QPQP…GQRQ). Glycyl lysine isopeptide (Lys-Gly) (interchain with G-Cter in SUMO2) cross-links involve residues K177 and K184. The residue at position 239 (S239) is a Phosphoserine; by PKA. The tract at residues 280 to 410 (RRKAANVTLL…YLTEALKAMD (131 aa)) is H-S-H (helix-span-helix), dimerization. Residues 414-427 (LSNNPNSHTDNNAK) are compositionally biased toward polar residues. Residues 414–437 (LSNNPNSHTDNNAKSSDKEEKHRK) form a disordered region. Positions 428–437 (SSDKEEKHRK) are enriched in basic and acidic residues.

This sequence belongs to the AP-2 family. Binds DNA as a dimer. Can form homodimers or heterodimers with other AP-2 family members. Interacts with WWOX. Interacts with CITED4. Interacts with UBE2I. Interacts with RALBP1 in a complex also containing EPN1 and NUMB during interphase and mitosis. Interacts with KCTD1; this interaction represses transcription activation. Interacts (via C-terminus) with CITED2 (via C-terminus); the interaction stimulates TFAP2A-transcriptional activation. Interacts (via N-terminus) with EP300 (via N-terminus); the interaction requires CITED2. Interacts with KCTD15; this interaction inhibits TFAP2A transcriptional activation. In terms of processing, sumoylated on Lys-10; which inhibits transcriptional activity.

It localises to the nucleus. Functionally, sequence-specific DNA-binding protein that interacts with inducible viral and cellular enhancer elements to regulate transcription of selected genes. AP-2 factors bind to the consensus sequence 5'-GCCNNNGGC-3' and activate genes involved in a large spectrum of important biological functions including proper eye, face, body wall, limb and neural tube development. They also suppress a number of genes including MCAM/MUC18, C/EBP alpha and MYC. AP-2-alpha is the only AP-2 protein required for early morphogenesis of the lens vesicle. Together with the CITED2 coactivator, stimulates the PITX2 P1 promoter transcription activation. Associates with chromatin to the PITX2 P1 promoter region. The protein is Transcription factor AP-2-alpha (TFAP2A) of Bos taurus (Bovine).